The sequence spans 50 residues: Metallothionein zym1 (50 aa).

Residues cysteine 7, cysteine 15, cysteine 17, cysteine 21, cysteine 23, cysteine 26, cysteine 30, cysteine 32, cysteine 40, cysteine 42, cysteine 45, and cysteine 47 each coordinate Zn(2+).

The protein belongs to the metallothionein superfamily.

The protein resides in the cytoplasm. The protein localises to the nucleus. In terms of biological role, metallothionein involved in tolerance to zinc and cadmium. Binds four zinc ions. The polypeptide is Metallothionein zym1 (zym1) (Schizosaccharomyces pombe (strain 972 / ATCC 24843) (Fission yeast)).